We begin with the raw amino-acid sequence, 221 residues long: NIP3 homolog (221 aa).

The interval 24 to 55 (GEKTDESVQPQQQTEQSSAQQTTPSAKAVSNP) is disordered. A Glycyl lysine isopeptide (Lys-Gly) (interchain with G-Cter in ubiquitin) cross-link involves residue Lys-26. Positions 32 to 49 (QPQQQTEQSSAQQTTPSA) are enriched in low complexity. A helical transmembrane segment spans residues 189 to 209 (VVFGFLVTNIFSFVVGAAVGF). A required for initiation of apoptosis region spans residues 189–209 (VVFGFLVTNIFSFVVGAAVGF).

This sequence belongs to the NIP3 family. As to quaternary structure, homodimer; via transmembrane domain. Interacts with ced-3 and ced-9. Post-translationally, ubiquitinated and degraded by the proteasome. Under oxidative stress conditions, ubiquitinated at Lys-26 in a pink-1 dependent manner. Colocalizes with pdr-1 and may be ubiquitinated by it. In terms of tissue distribution, expressed in all somatic tissues including neurons, pharynx, intestine, body wall muscles and vulva muscles.

It localises to the mitochondrion outer membrane. Its function is as follows. Initiates apoptosis in a BH3-independent mechanism possibly by recruiting ced-3 to mitochondria and other cytoplasmic membranes. Has a role in lifespan and tumor growth. Required for the induction of mitophagy under stress conditions. The sequence is that of NIP3 homolog from Caenorhabditis elegans.